A 69-amino-acid chain; its full sequence is DLITNSYTRGKPRHVTSWRNLKTRDVCDSLVEGRCIHNGCQCDRSAPHGNCCDTDGCTSLWWCPKTKWD.

A propeptide spanning residues 1–23 is cleaved from the precursor; it reads DLITNSYTRGKPRHVTSWRNLKT.

Post-translationally, contains 4 disulfide bonds. In terms of tissue distribution, expressed by the venom duct.

The protein resides in the secreted. The protein is Conotoxin Cal12.1p4 of Californiconus californicus (California cone).